The chain runs to 164 residues: UPF0225 protein Shewana3_2159 (164 aa).

This sequence belongs to the UPF0225 family.

In Shewanella sp. (strain ANA-3), this protein is UPF0225 protein Shewana3_2159.